The sequence spans 1639 residues: MAKDSPSPLGASPKKPGCSSPAAAVLENQRRELEKLRAELEAERAGWRAERRRFAARERQLREEAERERRQLADRLRSKWEAQRSRELRQLQEEMQREREAEIRQLLRWKEAEQRQLQQLLHRERDGVVRQARELQRQLAEELVNRGHCSRPGASEVSAAQCRCRLQEVLAQLRWQTDGEQAARIRYLQAALEVERQLFLKYILAHFRGHPALSGSPDPQAVHSLEEPLPQTSSGSCHAPKPACQLGSLDSLSAEVGVRSRSLGLVSSACSSSPDGLLSTHASSLDCFAPACSRSLDSTRSLPKASKSEERPSSPDTSTPGSRRLSPPPSPLPPPPPPSAHRKLSNPRGGEGSESQPCEVLTPSPPGLGHHELIKLNWLLAKALWVLARRCYTLQEENKQLRRAGCPYQADEKVKRLKVKRAELTGLARRLADRARELQETNLRAVSAPIPGESCAGLELCQVFARQRARDLSEQASAPLAKDKQIEELRQECHLLQARVASGPCSDLHTGRGGPCTQWLNVRDLDRLQRESQREVLRLQRQLMLQQGNGGAWPEAGGQSATCEEVRRQMLALERELDQRRRECQELGTQAAPARRRGEEAETQLQAALLKNAWLAEENGRLQAKTDWVRKVEAENSEVRGHLGRACQERDASGLIAEQLLQQAARGQDRQQQLQRDPQKALCDLHPSWKEIQALQCRPGHPPEQPWETSQMPESQVKGSRRPKFHARPEDYAVSQPNRDIQEKREASLEESPVALGESASVPQVSETVPASQPLSKKTSSQSNSSSEGSMWATVPSSPTLDRDTASEVDDLEPDSVSLALEMGGSAAPAAPKLKIFMAQYNYNPFEGPNDHPEGELPLTAGDYIYIFGDMDEDGFYEGELDDGRRGLVPSNFVEQIPDSYIPGCLPAKSPDLGPSQLPAGQDEALEEDSLLSGKAQGMVDRGLCQMVRVGSKTEVATEILDTKTEACQLGLLQSMGKQGLSRPLLGTKGVLRMAPMQLHLQNVTATSANITWVYSSHRHPHVVYLDDREHALTPAGVSCYTFQGLCPGTHYRVRVEVRLPWDLLQVYWGTMSSTVTFDTLLAGPPYPPLEVLVERHASPGVLVVSWLPVTIDSAGSSNGVQVTGYAVYADGLKVCEVADATAGSTVLEFSQLQVPLTWQKVSVRTMSLCGESLDSVPAQIPEDFFMCHRWPETPPFSYTCGDPSTYRVTFPVCPQKLSLAPPSAKASPHNPGSCGEPQAKFLEAFFEEPPRRQSPVSNLGSEGECPSSGAGSQAQELAEAWEGCRKDLLFQKSPQNHRPPSVSDQPGEKENCYQHMGTSKSPAPGFIHLRTECGPRKEPCQEKAALERVLRQKQDAQGFTPPQLGASQQYASDFHNVLKEEQEALCLDLRGTERREERREPEPHSRQGQALGVKRGCQLHEPSSALCPAPSAKVIKMPRGGPQQLGTGANTPARVFVALSDYNPLVMSANLKAAEEELVFQKRQLLRVWGSQDTHDFYLSECNRQVGNIPGRLVAEMEVGTEQTDRRWRSPAQGHLPSVAHLEDFQGLTIPQGSSLVLQGNSKRLPLWTPKIMIAALDYDPGDGQMGGQGKGRLALRAGDVVMVYGPMDDQGFYYGELGGHRGLVPAHLLDHMSLHGH.

Disordered regions lie at residues 1–22 (MAKD…SSPA), 215–240 (GSPD…CHAP), and 295–364 (SLDS…LTPS). A coiled-coil region spans residues 21–143 (PAAAVLENQR…ELQRQLAEEL (123 aa)). The span at 326-339 (SPPPSPLPPPPPPS) shows a compositional bias: pro residues. 2 coiled-coil regions span residues 409–442 (QADE…QETN) and 480–619 (LAKD…AEEN). Residues 697–811 (CRPGHPPEQP…DRDTASEVDD (115 aa)) form a disordered region. Polar residues-rich tracts occupy residues 707–718 (WETSQMPESQVK) and 761–775 (SVPQ…SQPL). The segment covering 776 to 790 (SKKTSSQSNSSSEGS) has biased composition (low complexity). Positions 832 to 899 (PKLKIFMAQY…PSNFVEQIPD (68 aa)) constitute an SH3 1 domain. Fibronectin type-III domains lie at 995-1083 (APMQ…TLLA) and 1088-1184 (PPLE…IPED). Disordered regions lie at residues 1251–1273 (PRRQ…GAGS), 1292–1325 (QKSP…SPAP), and 1392–1413 (GTER…QALG). Residues 1293-1305 (KSPQNHRPPSVSD) are compositionally biased toward polar residues. Residues 1392-1406 (GTERREERREPEPHS) show a composition bias toward basic and acidic residues. 2 consecutive SH3 domains span residues 1452 to 1520 (TPAR…EMEV) and 1569 to 1636 (WTPK…HMSL).

The protein belongs to the RIMBP family. As to quaternary structure, interacts with LRGUK (via guanylate kinase-like domain). Interacts (via C-terminus) with HOOK1 (via coiled-coil region).

The protein localises to the cytoplasm. The protein resides in the cytoskeleton. Functionally, probable component of the manchette, a microtubule-based structure which plays a key role in sperm head morphogenesis during late stages of sperm development. The chain is RIMS-binding protein 3B (RIMBP3B) from Homo sapiens (Human).